Consider the following 86-residue polypeptide: Omega-theraphotoxin-Hhn1f 3 (86 aa).

An N-terminal signal peptide occupies residues Met-1–Ala-21. Residues Ser-22 to Arg-50 constitute a propeptide that is removed on maturation. Disulfide bonds link Cys-52-Cys-66, Cys-59-Cys-71, and Cys-65-Cys-78.

Belongs to the neurotoxin 10 (Hwtx-1) family. 17 (Hntx-9) subfamily. In terms of tissue distribution, expressed by the venom gland.

It is found in the secreted. Its function is as follows. Ion channel inhibitor. This chain is Omega-theraphotoxin-Hhn1f 3, found in Cyriopagopus hainanus (Chinese bird spider).